The primary structure comprises 316 residues: Aspartate carbamoyltransferase catalytic subunit (316 aa).

Carbamoyl phosphate-binding residues include Arg66 and Thr67. Lys94 contacts L-aspartate. The carbamoyl phosphate site is built by Arg116, His146, and Gln149. Residues Arg179 and Arg234 each coordinate L-aspartate. Gly275 and Pro276 together coordinate carbamoyl phosphate.

It belongs to the aspartate/ornithine carbamoyltransferase superfamily. ATCase family. In terms of assembly, heterododecamer (2C3:3R2) of six catalytic PyrB chains organized as two trimers (C3), and six regulatory PyrI chains organized as three dimers (R2).

It carries out the reaction carbamoyl phosphate + L-aspartate = N-carbamoyl-L-aspartate + phosphate + H(+). Its pathway is pyrimidine metabolism; UMP biosynthesis via de novo pathway; (S)-dihydroorotate from bicarbonate: step 2/3. In terms of biological role, catalyzes the condensation of carbamoyl phosphate and aspartate to form carbamoyl aspartate and inorganic phosphate, the committed step in the de novo pyrimidine nucleotide biosynthesis pathway. This Nitrosomonas eutropha (strain DSM 101675 / C91 / Nm57) protein is Aspartate carbamoyltransferase catalytic subunit.